The chain runs to 644 residues: MEAVVNSDVFLTSNTGLKSSYTNQTLSLVDEDHIHTSDKSLSCSVCNSLSQIVDDDFISAGARNQRTKPKRAGNDQAQQTTKKDCMVSIDEVASTHDWSTRLRNDGNAIAKYLTTNKYDTSNFTIQDMLNIMNKLNIVRTNRNELFQLLTHVKSTLNNASVSVKCTHPLVLIHSRASPRIGDQLKELDKIYSPSNHHILLSTTRFQSMHFTDMSSSQDLSFIYRKPETNYYIHPILMALFGIKLPALENAYVHGDTYSLIQQLYEFRRVKSYNYMLLVNRLTEDNPIVITGVSDLISTEIQRANMHTMIRKAIMNIRMGIFYCNDDDAVDPHLMKIIHTGCSQVMTDEEQILASILSIVGFRPTLVSVARPINGISYDMKLQAAPYIVVNPMKMITTSDSPISINSKDIYSMAFDGNSGRVVFAPPNIGYGRCSGVTHIDSLGTNVMGSAVHSPVIVNGAMMFYVERRQNKNMFGGECYTGFRSLIDDTPIDVSPEIMLNGIMYRLKSAVCYKLGDQFFDCGSSDIFLKGHYTILFTENGPWMYDPLSVFNPGARNARLMRALKNQYKKLSMDSDDGFYEWLNGDGSVFAASKQQMLMNHVANFDDDLLTMEEAMSMISRHCCILIYAQDYDQYISARHITELF.

Residues 1–61 (MEAVVNSDVF…IVDDDFISAG (61 aa)) constitute a propeptide that is removed on maturation. The segment at 61–80 (GARNQRTKPKRAGNDQAQQT) is disordered.

Belongs to the orthopoxvirus OPG129 family. The 73-kDa precursor is cleaved to a mature protein of 60 kDa during virion maturation. Proteolytic cleavage of major core proteins OPG129, OPG136, and OPG098, which occurs at a late stage of core formation, is required for production of infectious mature virions (MV).

The protein localises to the virion. Its function is as follows. Major component of the virion core that undergoes proteolytic processing during the immature virion (IV) to mature virion (MV) transition. Essential for the formation of a structurally normal core. The chain is Major core protein OPG129 (OPG129) from Variola virus (isolate Human/India/Ind3/1967) (VARV).